Here is a 498-residue protein sequence, read N- to C-terminus: ATP synthase subunit beta, chloroplastic (498 aa).

172-179 (GGAGVGKT) serves as a coordination point for ATP.

This sequence belongs to the ATPase alpha/beta chains family. As to quaternary structure, F-type ATPases have 2 components, CF(1) - the catalytic core - and CF(0) - the membrane proton channel. CF(1) has five subunits: alpha(3), beta(3), gamma(1), delta(1), epsilon(1). CF(0) has four main subunits: a(1), b(1), b'(1) and c(9-12).

It is found in the plastid. The protein resides in the chloroplast thylakoid membrane. The enzyme catalyses ATP + H2O + 4 H(+)(in) = ADP + phosphate + 5 H(+)(out). In terms of biological role, produces ATP from ADP in the presence of a proton gradient across the membrane. The catalytic sites are hosted primarily by the beta subunits. The protein is ATP synthase subunit beta, chloroplastic of Chamaerops humilis (Mediterranean fan palm).